A 195-amino-acid chain; its full sequence is GTP-dependent dephospho-CoA kinase (195 aa).

GTP contacts are provided by D49, V50, D68, E127, and D150.

It belongs to the GTP-dependent DPCK family.

The catalysed reaction is 3'-dephospho-CoA + GTP = GDP + CoA + H(+). The protein operates within cofactor biosynthesis; coenzyme A biosynthesis. Its function is as follows. Catalyzes the GTP-dependent phosphorylation of the 3'-hydroxyl group of dephosphocoenzyme A to form coenzyme A (CoA). The protein is GTP-dependent dephospho-CoA kinase of Methanosarcina barkeri (strain Fusaro / DSM 804).